Consider the following 251-residue polypeptide: Triosephosphate isomerase (251 aa).

A substrate-binding site is contributed by 9–11 (NWK). His-95 functions as the Electrophile in the catalytic mechanism. Glu-167 (proton acceptor) is an active-site residue. Substrate is bound by residues Gly-173, Ser-212, and 233 to 234 (GG).

Belongs to the triosephosphate isomerase family. In terms of assembly, homodimer.

It localises to the cytoplasm. The catalysed reaction is D-glyceraldehyde 3-phosphate = dihydroxyacetone phosphate. The protein operates within carbohydrate biosynthesis; gluconeogenesis. It functions in the pathway carbohydrate degradation; glycolysis; D-glyceraldehyde 3-phosphate from glycerone phosphate: step 1/1. Involved in the gluconeogenesis. Catalyzes stereospecifically the conversion of dihydroxyacetone phosphate (DHAP) to D-glyceraldehyde-3-phosphate (G3P). The sequence is that of Triosephosphate isomerase from Pseudomonas putida (strain ATCC 700007 / DSM 6899 / JCM 31910 / BCRC 17059 / LMG 24140 / F1).